Reading from the N-terminus, the 209-residue chain is NAD(P)H-quinone oxidoreductase subunit I (209 aa).

4Fe-4S ferredoxin-type domains are found at residues 55 to 84 and 95 to 124; these read GRIH…VDYE and NSYS…MTEE. [4Fe-4S] cluster is bound by residues Cys64, Cys67, Cys70, Cys74, Cys104, Cys107, Cys110, and Cys114.

Belongs to the complex I 23 kDa subunit family. As to quaternary structure, NDH-1 is composed of at least 11 different subunits. It depends on [4Fe-4S] cluster as a cofactor.

It localises to the cell inner membrane. The enzyme catalyses a plastoquinone + NADH + (n+1) H(+)(in) = a plastoquinol + NAD(+) + n H(+)(out). The catalysed reaction is a plastoquinone + NADPH + (n+1) H(+)(in) = a plastoquinol + NADP(+) + n H(+)(out). Its function is as follows. NDH-1 shuttles electrons from an unknown electron donor, via FMN and iron-sulfur (Fe-S) centers, to quinones in the respiratory and/or the photosynthetic chain. The immediate electron acceptor for the enzyme in this species is believed to be plastoquinone. Couples the redox reaction to proton translocation, and thus conserves the redox energy in a proton gradient. In Gloeobacter violaceus (strain ATCC 29082 / PCC 7421), this protein is NAD(P)H-quinone oxidoreductase subunit I.